Consider the following 227-residue polypeptide: Cytochrome c oxidase subunit 2 (227 aa).

Residues 1–26 (MATWSNFNLQNSASPLMEQIIFFHDH) are Mitochondrial intermembrane-facing. The helical transmembrane segment at 27–51 (TLVILIMITILVGYLMISLFFNSYI) threads the bilayer. At 52 to 62 (NRFLLEGQMIE) the chain is on the mitochondrial matrix side. Residues 63-81 (LIWTILPAITLIFIALPSL) form a helical membrane-spanning segment. Topologically, residues 82-227 (RLLYLLDELN…NFINWINNYS (146 aa)) are mitochondrial intermembrane. Residues histidine 161, cysteine 196, glutamate 198, cysteine 200, histidine 204, and methionine 207 each coordinate Cu cation. Glutamate 198 contributes to the Mg(2+) binding site.

The protein belongs to the cytochrome c oxidase subunit 2 family. Component of the cytochrome c oxidase (complex IV, CIV), a multisubunit enzyme composed of a catalytic core of 3 subunits and several supernumerary subunits. The complex exists as a monomer or a dimer and forms supercomplexes (SCs) in the inner mitochondrial membrane with ubiquinol-cytochrome c oxidoreductase (cytochrome b-c1 complex, complex III, CIII). Requires Cu cation as cofactor.

It localises to the mitochondrion inner membrane. The enzyme catalyses 4 Fe(II)-[cytochrome c] + O2 + 8 H(+)(in) = 4 Fe(III)-[cytochrome c] + 2 H2O + 4 H(+)(out). In terms of biological role, component of the cytochrome c oxidase, the last enzyme in the mitochondrial electron transport chain which drives oxidative phosphorylation. The respiratory chain contains 3 multisubunit complexes succinate dehydrogenase (complex II, CII), ubiquinol-cytochrome c oxidoreductase (cytochrome b-c1 complex, complex III, CIII) and cytochrome c oxidase (complex IV, CIV), that cooperate to transfer electrons derived from NADH and succinate to molecular oxygen, creating an electrochemical gradient over the inner membrane that drives transmembrane transport and the ATP synthase. Cytochrome c oxidase is the component of the respiratory chain that catalyzes the reduction of oxygen to water. Electrons originating from reduced cytochrome c in the intermembrane space (IMS) are transferred via the dinuclear copper A center (CU(A)) of subunit 2 and heme A of subunit 1 to the active site in subunit 1, a binuclear center (BNC) formed by heme A3 and copper B (CU(B)). The BNC reduces molecular oxygen to 2 water molecules using 4 electrons from cytochrome c in the IMS and 4 protons from the mitochondrial matrix. The protein is Cytochrome c oxidase subunit 2 (COII) of Choristoneura rosaceana (Oblique banded leafroller).